Here is a 59-residue protein sequence, read N- to C-terminus: Large ribosomal subunit protein bL32 (59 aa).

Residues 1–19 (MAQPKKKTSKSRRNMRRSH) show a composition bias toward basic residues. Residues 1–20 (MAQPKKKTSKSRRNMRRSHD) are disordered.

It belongs to the bacterial ribosomal protein bL32 family.

The protein is Large ribosomal subunit protein bL32 of Maridesulfovibrio salexigens (strain ATCC 14822 / DSM 2638 / NCIMB 8403 / VKM B-1763) (Desulfovibrio salexigens).